Reading from the N-terminus, the 1391-residue chain is DNA-directed RNA polymerase subunit beta' (1391 aa).

Cys-72, Cys-74, Cys-87, and Cys-90 together coordinate Zn(2+). Positions 462, 464, and 466 each coordinate Mg(2+). 4 residues coordinate Zn(2+): Cys-816, Cys-890, Cys-897, and Cys-900.

The protein belongs to the RNA polymerase beta' chain family. In terms of assembly, the RNAP catalytic core consists of 2 alpha, 1 beta, 1 beta' and 1 omega subunit. When a sigma factor is associated with the core the holoenzyme is formed, which can initiate transcription. Requires Mg(2+) as cofactor. The cofactor is Zn(2+).

It carries out the reaction RNA(n) + a ribonucleoside 5'-triphosphate = RNA(n+1) + diphosphate. In terms of biological role, DNA-dependent RNA polymerase catalyzes the transcription of DNA into RNA using the four ribonucleoside triphosphates as substrates. The sequence is that of DNA-directed RNA polymerase subunit beta' from Neisseria gonorrhoeae (strain NCCP11945).